Reading from the N-terminus, the 145-residue chain is D-aminoacyl-tRNA deacylase (145 aa).

The Gly-cisPro motif, important for rejection of L-amino acids motif lies at G137–P138.

This sequence belongs to the DTD family. Homodimer.

The protein resides in the cytoplasm. The enzyme catalyses glycyl-tRNA(Ala) + H2O = tRNA(Ala) + glycine + H(+). It carries out the reaction a D-aminoacyl-tRNA + H2O = a tRNA + a D-alpha-amino acid + H(+). In terms of biological role, an aminoacyl-tRNA editing enzyme that deacylates mischarged D-aminoacyl-tRNAs. Also deacylates mischarged glycyl-tRNA(Ala), protecting cells against glycine mischarging by AlaRS. Acts via tRNA-based rather than protein-based catalysis; rejects L-amino acids rather than detecting D-amino acids in the active site. By recycling D-aminoacyl-tRNA to D-amino acids and free tRNA molecules, this enzyme counteracts the toxicity associated with the formation of D-aminoacyl-tRNA entities in vivo and helps enforce protein L-homochirality. This Azotobacter vinelandii (strain DJ / ATCC BAA-1303) protein is D-aminoacyl-tRNA deacylase.